The sequence spans 217 residues: Probable transaldolase (217 aa).

K83 (schiff-base intermediate with substrate) is an active-site residue.

This sequence belongs to the transaldolase family. Type 3B subfamily.

The protein resides in the cytoplasm. The catalysed reaction is D-sedoheptulose 7-phosphate + D-glyceraldehyde 3-phosphate = D-erythrose 4-phosphate + beta-D-fructose 6-phosphate. The protein operates within carbohydrate degradation; pentose phosphate pathway; D-glyceraldehyde 3-phosphate and beta-D-fructose 6-phosphate from D-ribose 5-phosphate and D-xylulose 5-phosphate (non-oxidative stage): step 2/3. Functionally, transaldolase is important for the balance of metabolites in the pentose-phosphate pathway. The protein is Probable transaldolase of Ruegeria pomeroyi (strain ATCC 700808 / DSM 15171 / DSS-3) (Silicibacter pomeroyi).